A 534-amino-acid chain; its full sequence is Ethanolamine kinase (534 aa).

At serine 23 the chain carries Phosphoserine.

The protein belongs to the choline/ethanolamine kinase family.

The protein localises to the cytoplasm. The enzyme catalyses ethanolamine + ATP = phosphoethanolamine + ADP + H(+). It catalyses the reaction choline + ATP = phosphocholine + ADP + H(+). The protein operates within phospholipid metabolism; phosphatidylethanolamine biosynthesis; phosphatidylethanolamine from ethanolamine: step 1/3. In terms of biological role, catalyzes the committed step of phosphatidylethanolamine synthesis via the CDP-ethanolamine branch of the Kennedy pathway. Also exhibits choline kinase activity, thus contributing to phosphatidylcholine synthesis via the CDP-choline pathway, but its preferred substrate is ethanolamine. The protein is Ethanolamine kinase (EKI1) of Saccharomyces cerevisiae (strain ATCC 204508 / S288c) (Baker's yeast).